A 227-amino-acid polypeptide reads, in one-letter code: Ribose-5-phosphate isomerase A (227 aa).

Residues Thr-26–Thr-29, Asp-82–Asp-85, and Lys-95–Gly-98 each bind substrate. Glu-104 functions as the Proton acceptor in the catalytic mechanism. Lys-122 contacts substrate.

Belongs to the ribose 5-phosphate isomerase family. In terms of assembly, homodimer.

The enzyme catalyses aldehydo-D-ribose 5-phosphate = D-ribulose 5-phosphate. Its pathway is carbohydrate degradation; pentose phosphate pathway; D-ribose 5-phosphate from D-ribulose 5-phosphate (non-oxidative stage): step 1/1. Its function is as follows. Catalyzes the reversible conversion of ribose-5-phosphate to ribulose 5-phosphate. The chain is Ribose-5-phosphate isomerase A from Streptococcus pneumoniae serotype 4 (strain ATCC BAA-334 / TIGR4).